The chain runs to 200 residues: Large ribosomal subunit protein bL9 (200 aa).

It belongs to the bacterial ribosomal protein bL9 family.

Functionally, binds to the 23S rRNA. This is Large ribosomal subunit protein bL9 from Ruegeria pomeroyi (strain ATCC 700808 / DSM 15171 / DSS-3) (Silicibacter pomeroyi).